The following is a 394-amino-acid chain: Na(+)/H(+) antiporter NhaA 2 (394 aa).

Transmembrane regions (helical) follow at residues 13 to 33 (FGGVLLIIATILALLFQNGFL), 58 to 78 (LILWVNDGLMAIFFFVVGLEL), 93 to 113 (IALPTIGALGGVILPAVIFWA), 124 to 144 (GWAIPTATDIAFALGVLMLLG), 153 to 173 (IFLLTLAIIDDLCAIVIIAIF), 176 to 196 (TKLSFISFVIAGICLFALWVL), 208 to 228 (ILVTLILWVSVLKSGVHATIA), 260 to 280 (YFILPVFAFVNAGVSLAGVQI), 291 to 311 (IFFGLLIGKQVGVFLFSYIFI), 327 to 347 (FYGVCILTGIGFTMSLFVNSL), and 361 to 381 (LGILLASFTAGVIGYIYLLVF).

This sequence belongs to the NhaA Na(+)/H(+) (TC 2.A.33) antiporter family.

The protein resides in the cell inner membrane. The enzyme catalyses Na(+)(in) + 2 H(+)(out) = Na(+)(out) + 2 H(+)(in). Na(+)/H(+) antiporter that extrudes sodium in exchange for external protons. The protein is Na(+)/H(+) antiporter NhaA 2 of Campylobacter fetus subsp. fetus (strain 82-40).